An 826-amino-acid polypeptide reads, in one-letter code: Putative ankyrin repeat protein RBE_0220 (826 aa).

8 ANK repeats span residues 308–337 (LGTS…DQHA), 342–371 (IDMS…DPNY), 375–404 (DNDT…DPNK), 445–474 (NDFT…DVNA), 478–507 (DGFT…NPDV), 512–541 (TKSS…NPNL), 545–574 (DGTT…DINK), and 578–607 (NGDN…DLKK).

This Rickettsia bellii (strain RML369-C) protein is Putative ankyrin repeat protein RBE_0220.